Reading from the N-terminus, the 71-residue chain is Putative membrane protein insertion efficiency factor (71 aa).

It belongs to the UPF0161 family.

It localises to the cell membrane. Could be involved in insertion of integral membrane proteins into the membrane. This is Putative membrane protein insertion efficiency factor from Ruminiclostridium cellulolyticum (strain ATCC 35319 / DSM 5812 / JCM 6584 / H10) (Clostridium cellulolyticum).